A 445-amino-acid polypeptide reads, in one-letter code: Putrescine hydroxycinnamoyltransferase 1 (445 aa).

Active-site proton acceptor residues include His154 and Asp388.

The protein belongs to the plant acyltransferase family. In terms of tissue distribution, expressed in leaves.

Functionally, hydroxycinnamoyl transferase that catalyzes the transfer of an acyl from p-coumaryol-CoA to putrescine, to produce coumaroyl putrescine. This is Putrescine hydroxycinnamoyltransferase 1 from Oryza sativa subsp. japonica (Rice).